Reading from the N-terminus, the 843-residue chain is MTASSGGYQGWERRNNNIPETVGILFLQVRAVSSGKKAAQCRETAPTAGLSESSRPRLFAMDYSKGSKKRKAITKDVDEDPSVVSGDEYDLEALDRNDSDSSADASDSEIELIGDFSSDDGEDDDGEDDDELDSDEVPSDTEPFARVKSGNIATGLDGSLDGESNDLSDDNEPNYRIEKDANGNDRYIYPEINPDDNSEYSEVDEEANTIGDIPLSFYDQYPHIGYNINGKKILRPAKGQALDALLDSIEIPKGWTGLTDPSTGKPLQLSQEELELLRKVQMNEITQDGYDPYQPTIEYFTSKQEIMPLSAAPEPKRRFIPSKHEAKRVMKIVKAIREGRILPYKPPEEEDATQEGIQTYDLWADESPRPDHPMNIPAPKLPPPGYEESYHPPPEYLPDKKEKEEWENQDEEDREREYLPTDYSTLRKVPGYERFVKEKFERCLDLYLAPRVRRSKLNIDPESLLPKLPSPEELKPFPTTCATLFRGHRGRVRSLAIDPTGVWLASGGDDGTVRVWELLTGRQLWSVKLSDEDAVNVVRWRPGKEAVVLAASVGDSIYLAVPDVVNLELEAASLEVIDAGWGYATSTGTSTTKKTSPVQWTRPASSLADSGVYAVIPLGYIAKSISWHRRGDYFVTVCPGTSTPASVAIAIHTLSKHLTQYPFRRRLKGGGSPQVAHFHPSKPILFVANQRSIRAYDLSRQTLVKILRPGARWISSFDIHPTSSSTSGGDNLIVGSYDRRLLWHDVDLSDRPYKTLRYHQKAIRAVKYHPHYPLFADTSDDGSLQIFHGSVTGDLLSNANIVPLKVLKGHKVTGDLGVLDLDWHPREAWCVSAGADGTCRLWM.

Disordered stretches follow at residues 36 to 189 (KKAA…RYIY) and 364 to 419 (ADES…REYL). Acidic residues-rich tracts occupy residues 77–92 (VDED…YDLE), 106–139 (SDSE…EVPS), and 163–172 (ESNDLSDDNE). A compositionally biased stretch (basic and acidic residues) spans 173 to 183 (PNYRIEKDANG). Over residues 379–396 (PKLPPPGYEESYHPPPEY) the composition is skewed to pro residues. Residues 397–406 (LPDKKEKEEW) are compositionally biased toward basic and acidic residues. WD repeat units follow at residues 487-526 (GHRG…QLWS), 530-570 (SDED…LELE), 668-706 (KGGG…LVKI), 709-754 (PGAR…RPYK), 758-797 (YHQK…DLLS), and 813-843 (TGDL…RLWM).

This sequence belongs to the WD repeat BOP1/ERB1 family. As to quaternary structure, component of the NOP7 complex, composed of ERB1, NOP7 and YTM1. The complex is held together by ERB1, which interacts with NOP7 via its N-terminal domain and with YTM1 via a high-affinity interaction between the seven-bladed beta-propeller domains of the 2 proteins. The NOP7 complex associates with the 66S pre-ribosome.

The protein localises to the nucleus. It is found in the nucleolus. Its subcellular location is the nucleoplasm. Its function is as follows. Component of the NOP7 complex, which is required for maturation of the 25S and 5.8S ribosomal RNAs and formation of the 60S ribosome. This is Ribosome biogenesis protein ERB1 from Coccidioides immitis (strain RS) (Valley fever fungus).